The primary structure comprises 34 residues: Leader peptide SpeFL (34 aa).

An Ornithine recognition loop motif is present at residues 10–16 (HIRRTTH). Arg13 is a binding site for L-ornithine.

It belongs to the speF operon leader peptide family. Binds ornithine in stalled 70S ribosomes, blocking the upper two-thirds of the exit tunnel. Contacts 23S rRNA and ribosomal proteins L4 and L22.

A small protein (arrest peptide) encoded upstream of inducible ornithine carboxylase gene (speF) that controls expression of downstream genes (speF and potE) by transcriptional and translational attenuation. Its expression controls transcription and translation of downstream SpeF; translation pausing at low Arg levels on this mRNA prevents premature Rho-dependent transcription termination of speF and also enhances SprF translation by preventing sequestration of its ribosome-binding site. In the presence of high Arg levels translation of this protein allows the formation of an speF mRNA structure that is degraded by RNase G. The polypeptide is Leader peptide SpeFL (Salmonella typhimurium (strain SL1344)).